A 247-amino-acid chain; its full sequence is 5-hydroxytryptamine receptor 2A (247 aa).

A topological domain (extracellular) is located at residue Lys1. A helical membrane pass occupies residues 2–26 (LCAIWIYLDVLFSTASIMHLCAISL). Cys3 and Cys82 are joined by a disulfide. Asp10 is a serotonin binding site. Residues 27 to 29 (DRY) carry the DRY motif; important for ligand-induced conformation changes motif. At 27–46 (DRYVAIQNPIHHSRFNSRTK) the chain is on the cytoplasmic side. The helical transmembrane segment at 47-70 (AFLKIIAVWTISVGISMPVPVFGL) threads the bilayer. The Extracellular segment spans residues 71-87 (QDDSKVFKEGSCLLADD). A helical membrane pass occupies residues 88 to 113 (NFVLIGSFVAFFIPLTIMVITYFLTI). Residues 114-177 (KSLQKEATLC…QSISNEQKAC (64 aa)) are Cytoplasmic-facing. Ser135 is modified (phosphoserine). A helical transmembrane segment spans residues 178–203 (KVLGIVFFLFVVMWCPFFVTNIMAVI). Asn198 is a binding site for serotonin. Cys204 and Cys208 are oxidised to a cystine. The Extracellular segment spans residues 204–211 (CKESCNED). Residues 212 to 237 (VIGALLNVFVWIGYLSSAVNPLVYTL) form a helical membrane-spanning segment. Residues 231 to 235 (NPLVY) carry the NPxxY motif; important for ligand-induced conformation changes and signaling motif. Residues 238 to 247 (FNKTYRSAFA) are Cytoplasmic-facing.

Belongs to the G-protein coupled receptor 1 family. Interacts (via C-terminus) with MPDZ and PATJ. May interact (via C-terminus) with MPP3, PRDX6, DLG4, DLG1, CASK, APBA1 and MAGI2. Interacts with GRM2 and DRD2; this may affect signaling. Detected in adult intestine, especially in mucosal epithelium, longitudinal and circular layers of muscularis externa and myenteric plexuses. Highly expressed in Paneth cells, and detected at lower levels in enterocytes (at protein level).

It localises to the cell membrane. The protein localises to the cell projection. Its subcellular location is the dendrite. The protein resides in the axon. It is found in the cytoplasmic vesicle. It localises to the membrane. The protein localises to the caveola. Its subcellular location is the presynapse. G-protein coupled receptor activity is regulated by lipids: oleamide increases HTR2A-mediated activity. Its function is as follows. G-protein coupled receptor for 5-hydroxytryptamine (serotonin). Also functions as a receptor for various drugs and psychoactive substances, including mescaline, psilocybin, 1-(2,5-dimethoxy-4-iodophenyl)-2-aminopropane (DOI) and lysergic acid diethylamide (LSD). Ligand binding causes a conformation change that triggers signaling via guanine nucleotide-binding proteins (G proteins) and modulates the activity of downstream effectors. HTR2A is coupled to G(q)/G(11) G alpha proteins and activates phospholipase C-beta, releasing diacylglycerol (DAG) and inositol 1,4,5-trisphosphate (IP3) second messengers that modulate the activity of phosphatidylinositol 3-kinase and promote the release of Ca(2+) ions from intracellular stores, respectively. Beta-arrestin family members inhibit signaling via G proteins and mediate activation of alternative signaling pathways. Affects neural activity, perception, cognition and mood. Plays a role in the regulation of behavior, including responses to anxiogenic situations and psychoactive substances. Plays a role in intestinal smooth muscle contraction, and may play a role in arterial vasoconstriction. The sequence is that of 5-hydroxytryptamine receptor 2A (HTR2A) from Cavia porcellus (Guinea pig).